The sequence spans 371 residues: 4-hydroxy-3-methylbut-2-en-1-yl diphosphate synthase (flavodoxin) (371 aa).

Positions 268, 271, 303, and 310 each coordinate [4Fe-4S] cluster.

This sequence belongs to the IspG family. [4Fe-4S] cluster serves as cofactor.

It catalyses the reaction (2E)-4-hydroxy-3-methylbut-2-enyl diphosphate + oxidized [flavodoxin] + H2O + 2 H(+) = 2-C-methyl-D-erythritol 2,4-cyclic diphosphate + reduced [flavodoxin]. It participates in isoprenoid biosynthesis; isopentenyl diphosphate biosynthesis via DXP pathway; isopentenyl diphosphate from 1-deoxy-D-xylulose 5-phosphate: step 5/6. Converts 2C-methyl-D-erythritol 2,4-cyclodiphosphate (ME-2,4cPP) into 1-hydroxy-2-methyl-2-(E)-butenyl 4-diphosphate. This Lysinibacillus sphaericus (strain C3-41) protein is 4-hydroxy-3-methylbut-2-en-1-yl diphosphate synthase (flavodoxin).